Consider the following 427-residue polypeptide: Gamma-glutamyl phosphate reductase (427 aa).

Belongs to the gamma-glutamyl phosphate reductase family.

The protein resides in the cytoplasm. The enzyme catalyses L-glutamate 5-semialdehyde + phosphate + NADP(+) = L-glutamyl 5-phosphate + NADPH + H(+). The protein operates within amino-acid biosynthesis; L-proline biosynthesis; L-glutamate 5-semialdehyde from L-glutamate: step 2/2. Catalyzes the NADPH-dependent reduction of L-glutamate 5-phosphate into L-glutamate 5-semialdehyde and phosphate. The product spontaneously undergoes cyclization to form 1-pyrroline-5-carboxylate. The sequence is that of Gamma-glutamyl phosphate reductase from Rhizobium johnstonii (strain DSM 114642 / LMG 32736 / 3841) (Rhizobium leguminosarum bv. viciae).